Here is a 529-residue protein sequence, read N- to C-terminus: Bifunctional purine biosynthesis protein PurH (529 aa).

In terms of domain architecture, MGS-like spans 3–149; the sequence is DRIPLKRALI…KNHAFVTVVV (147 aa).

This sequence belongs to the PurH family.

It catalyses the reaction (6R)-10-formyltetrahydrofolate + 5-amino-1-(5-phospho-beta-D-ribosyl)imidazole-4-carboxamide = 5-formamido-1-(5-phospho-D-ribosyl)imidazole-4-carboxamide + (6S)-5,6,7,8-tetrahydrofolate. It carries out the reaction IMP + H2O = 5-formamido-1-(5-phospho-D-ribosyl)imidazole-4-carboxamide. It functions in the pathway purine metabolism; IMP biosynthesis via de novo pathway; 5-formamido-1-(5-phospho-D-ribosyl)imidazole-4-carboxamide from 5-amino-1-(5-phospho-D-ribosyl)imidazole-4-carboxamide (10-formyl THF route): step 1/1. It participates in purine metabolism; IMP biosynthesis via de novo pathway; IMP from 5-formamido-1-(5-phospho-D-ribosyl)imidazole-4-carboxamide: step 1/1. This Paracoccus denitrificans (strain Pd 1222) protein is Bifunctional purine biosynthesis protein PurH.